We begin with the raw amino-acid sequence, 621 residues long: DnaJ homolog subfamily C member 2 (621 aa).

Met-1 bears the N-acetylmethionine mark. Ser-47, Ser-49, Ser-60, and Ser-63 each carry phosphoserine. The 74-residue stretch at 88-161 (DHYAVLGLGH…VKRRAFNSVD (74 aa)) folds into the J domain. A ZRF1-UBD region spans residues 160-250 (VDPTFDNSVP…RDERKWIEKQ (91 aa)). A Phosphoserine modification is found at Ser-183. Disordered regions lie at residues 287–312 (GKAK…KEKQ) and 426–453 (KEEA…GSKN). SANT domains follow at residues 449 to 511 (SGSK…KLDP) and 549 to 604 (IDSI…EMVK).

As to quaternary structure, component of ribosome-associated complex (RAC), a heterodimer composed of Hsp70/DnaK-type chaperone HSPA14 and Hsp40/DnaJ-type chaperone DNAJC2. Interacts (via ZRF1-UBD region) with ID1. Post-translationally, phosphorylated in M (mitotic) phase.

It is found in the nucleus. The protein localises to the cytoplasm. Its subcellular location is the cytosol. Functionally, acts both as a chaperone in the cytosol and as a chromatin regulator in the nucleus. When cytosolic, acts as a molecular chaperone: component of the ribosome-associated complex (RAC), a complex involved in folding or maintaining nascent polypeptides in a folding-competent state. In the RAC complex, stimulates the ATPase activity of the ribosome-associated pool of Hsp70-type chaperones HSPA14 that bind to the nascent polypeptide chain. When nuclear, mediates the switching from polycomb-repressed genes to an active state: specifically recruited at histone H2A ubiquitinated at 'Lys-119' (H2AK119ub), and promotes the displacement of the polycomb PRC1 complex from chromatin, thereby facilitating transcription activation. This chain is DnaJ homolog subfamily C member 2 (Dnajc2), found in Rattus norvegicus (Rat).